A 200-amino-acid polypeptide reads, in one-letter code: Urease accessory protein UreE (200 aa).

The tract at residues 171–200 (HHGHAHPHPHDHDHQHGPGCAHGRHGHDHH) is disordered.

Belongs to the UreE family.

It is found in the cytoplasm. In terms of biological role, involved in urease metallocenter assembly. Binds nickel. Probably functions as a nickel donor during metallocenter assembly. This Burkholderia vietnamiensis (strain G4 / LMG 22486) (Burkholderia cepacia (strain R1808)) protein is Urease accessory protein UreE.